The chain runs to 368 residues: uncharacterized protein (368 aa).

Positions 1–19 (MHVSMIIFVSIFSIKYIMA) are cleaved as a signal peptide. Asn-99, Asn-170, Asn-266, and Asn-295 each carry an N-linked (GlcNAc...) asparagine; by host glycan.

This is an uncharacterized protein from Ostreid herpesvirus 1 (isolate France) (OsHV-1).